The chain runs to 393 residues: NAD(P)H-quinone oxidoreductase subunit H, chloroplastic (393 aa).

The protein belongs to the complex I 49 kDa subunit family. NDH is composed of at least 16 different subunits, 5 of which are encoded in the nucleus.

Its subcellular location is the plastid. The protein localises to the chloroplast thylakoid membrane. The catalysed reaction is a plastoquinone + NADH + (n+1) H(+)(in) = a plastoquinol + NAD(+) + n H(+)(out). The enzyme catalyses a plastoquinone + NADPH + (n+1) H(+)(in) = a plastoquinol + NADP(+) + n H(+)(out). In terms of biological role, NDH shuttles electrons from NAD(P)H:plastoquinone, via FMN and iron-sulfur (Fe-S) centers, to quinones in the photosynthetic chain and possibly in a chloroplast respiratory chain. The immediate electron acceptor for the enzyme in this species is believed to be plastoquinone. Couples the redox reaction to proton translocation, and thus conserves the redox energy in a proton gradient. The polypeptide is NAD(P)H-quinone oxidoreductase subunit H, chloroplastic (Amborella trichopoda).